The sequence spans 373 residues: Dual-specificity RNA methyltransferase RlmN (373 aa).

The active-site Proton acceptor is E94. One can recognise a Radical SAM core domain in the interval E100 to D339. Residues C107 and C344 are joined by a disulfide bond. [4Fe-4S] cluster contacts are provided by C114, C118, and C121. S-adenosyl-L-methionine is bound by residues G168 to E169, S200, S222 to H224, and N301. The active-site S-methylcysteine intermediate is C344.

Belongs to the radical SAM superfamily. RlmN family. Requires [4Fe-4S] cluster as cofactor.

The protein localises to the cytoplasm. It catalyses the reaction adenosine(2503) in 23S rRNA + 2 reduced [2Fe-2S]-[ferredoxin] + 2 S-adenosyl-L-methionine = 2-methyladenosine(2503) in 23S rRNA + 5'-deoxyadenosine + L-methionine + 2 oxidized [2Fe-2S]-[ferredoxin] + S-adenosyl-L-homocysteine. The enzyme catalyses adenosine(37) in tRNA + 2 reduced [2Fe-2S]-[ferredoxin] + 2 S-adenosyl-L-methionine = 2-methyladenosine(37) in tRNA + 5'-deoxyadenosine + L-methionine + 2 oxidized [2Fe-2S]-[ferredoxin] + S-adenosyl-L-homocysteine. Functionally, specifically methylates position 2 of adenine 2503 in 23S rRNA and position 2 of adenine 37 in tRNAs. m2A2503 modification seems to play a crucial role in the proofreading step occurring at the peptidyl transferase center and thus would serve to optimize ribosomal fidelity. The polypeptide is Dual-specificity RNA methyltransferase RlmN (Shewanella frigidimarina (strain NCIMB 400)).